The following is a 32-amino-acid chain: Dermaseptin-8 (32 aa).

Gln-32 carries the glutamine amide modification.

As to expression, expressed by the skin glands.

The protein resides in the secreted. Antimicrobial peptide, active against the Gram-positive bacterium S.aureus, and the Gram-negative bacteriun E.coli. Has hemolytic activity at 432 uM. This Phyllomedusa tarsius (Brownbelly leaf frog) protein is Dermaseptin-8.